The chain runs to 164 residues: Phosphopantetheine adenylyltransferase (164 aa).

Serine 9 is a substrate binding site. Residues 9–10 (SF) and histidine 17 contribute to the ATP site. Substrate-binding residues include lysine 41, leucine 73, and lysine 87. ATP is bound by residues 88 to 90 (GLR), glutamate 98, and 122 to 128 (YSYLSSS).

Belongs to the bacterial CoaD family. Homohexamer. The cofactor is Mg(2+).

The protein resides in the cytoplasm. It carries out the reaction (R)-4'-phosphopantetheine + ATP + H(+) = 3'-dephospho-CoA + diphosphate. It functions in the pathway cofactor biosynthesis; coenzyme A biosynthesis; CoA from (R)-pantothenate: step 4/5. In terms of biological role, reversibly transfers an adenylyl group from ATP to 4'-phosphopantetheine, yielding dephospho-CoA (dPCoA) and pyrophosphate. This is Phosphopantetheine adenylyltransferase from Rhodococcus erythropolis (strain PR4 / NBRC 100887).